The following is a 367-amino-acid chain: Forkhead box protein I2-B (367 aa).

The span at 31 to 40 (QQQNQQLPQR) shows a compositional bias: low complexity. Positions 31–51 (QQQNQQLPQRPAAPPAPGYGL) are disordered. Residues 124–218 (RPPYSYSSLI…DNGNFRRKRK (95 aa)) constitute a DNA-binding region (fork-head). The tract at residues 224–254 (VGAGFDEESNEDKKPLALKSLGPDSPGGASV) is disordered.

Its subcellular location is the nucleus. Possible transcriptional activator. The sequence is that of Forkhead box protein I2-B (foxi2-b) from Xenopus laevis (African clawed frog).